The following is a 983-amino-acid chain: Next to BRCA1 gene 1 protein (983 aa).

Residues Gln-4–Gly-86 form the PB1 domain. Residue Ser-117 is modified to Phosphoserine. The interval Met-126 to Asp-149 is disordered. The ZZ-type zinc-finger motif lies at Ser-214–Val-266. Residues Cys-219, Cys-222, Cys-233, Cys-236, Cys-242, Cys-245, His-252, and His-256 each coordinate Zn(2+). 2 ATG8 family proteins-binding regions span residues Ala-544 to Val-638 and Ala-745 to Glu-756. At Thr-588 the chain carries Phosphothreonine. Phosphoserine occurs at positions 592 and 598. The segment at Glu-611 to Leu-645 is disordered. The tract at residues Met-768–Ile-813 is disordered. Basic and acidic residues predominate over residues Ala-795–Pro-808. Ser-855 is subject to Phosphoserine. The segment at Asp-867 to Asn-894 is disordered. The region spanning Ser-930 to Asn-974 is the UBA domain.

As to quaternary structure, homooligomer and heterooligomer. Interacts with TRIM55. Interacts with titin/TTN. Interacts with RNF29, USP8, MAP1LC3A, MAP1LC3B, MAP1LC3C, GABARAP, GABARAPL1 and GABARAPL2. Binds to ubiquitin and ubiquitinated proteins. Interacts with SQSTM1. Interacts with TAX1BP1. Interacts with IRF3; this interaction mediates autophagic degradation of IRF3. Interacts with IL12A and IL12B. Phosphorylated by GSK3A; this phosphorylation inhibits NBR1 involvement in the formation of ubiquitinated protein aggregates.

It localises to the cytoplasm. It is found in the cytoplasmic vesicle. The protein resides in the autophagosome. The protein localises to the lysosome. Its subcellular location is the myofibril. It localises to the sarcomere. It is found in the m line. Functionally, ubiquitin-binding autophagy adapter that participates in different processes including host defense or intracellular homeostasis. Possesses a double function during the selective autophagy by acting as a shuttle bringing ubiquitinated proteins to autophagosomes and also by participating in the formation of protein aggregates. Plays a role in the regulation of the innate immune response by modulating type I interferon production and targeting ubiquitinated IRF3 for autophagic degradation. In response to oxidative stress, promotes an increase in SQSTM1 levels, phosphorylation, and body formation by preventing its autophagic degradation. In turn, activates the KEAP1-NRF2/NFE2L2 antioxidant pathway. Also plays non-autophagy role by mediating the shuttle of IL-12 to late endosome for subsequent secretion. This Rattus norvegicus (Rat) protein is Next to BRCA1 gene 1 protein (Nbr1).